The primary structure comprises 582 residues: Sulfite reductase [NADPH] hemoprotein beta-component (582 aa).

Positions 1-12 (MDLKVKVDRSRD) are enriched in basic and acidic residues. The segment at 1–26 (MDLKVKVDRSRDVSQPLDKLGPDETL) is disordered. [4Fe-4S] cluster is bound by residues C447, C453, C492, and C496. A siroheme-binding site is contributed by C496.

The protein belongs to the nitrite and sulfite reductase 4Fe-4S domain family. As to quaternary structure, alpha(8)-beta(8). The alpha component is a flavoprotein, the beta component is a hemoprotein. Siroheme is required as a cofactor. [4Fe-4S] cluster serves as cofactor.

It carries out the reaction hydrogen sulfide + 3 NADP(+) + 3 H2O = sulfite + 3 NADPH + 4 H(+). Its pathway is sulfur metabolism; hydrogen sulfide biosynthesis; hydrogen sulfide from sulfite (NADPH route): step 1/1. Its function is as follows. Component of the sulfite reductase complex that catalyzes the 6-electron reduction of sulfite to sulfide. This is one of several activities required for the biosynthesis of L-cysteine from sulfate. This Afipia carboxidovorans (strain ATCC 49405 / DSM 1227 / KCTC 32145 / OM5) (Oligotropha carboxidovorans) protein is Sulfite reductase [NADPH] hemoprotein beta-component.